The chain runs to 960 residues: Semaphorin-6C (960 aa).

The N-terminal stretch at 1–23 (MPRAPHSMPLLLLLLLSLPQAQT) is a signal peptide. The Extracellular segment spans residues 24-635 (AFPQDPIPLL…ASASRSIPIP (612 aa)). Residues 29–515 (PIPLLTSDLQ…FPGCIVYLSL (487 aa)) enclose the Sema domain. Asn69 carries an N-linked (GlcNAc...) asparagine glycan. 4 disulfide bridges follow: Cys110–Cys120, Cys138–Cys147, Cys261–Cys372, and Cys286–Cys331. The N-linked (GlcNAc...) asparagine glycan is linked to Asn285. The N-linked (GlcNAc...) asparagine glycan is linked to Asn436. Cystine bridges form between Cys478/Cys509, Cys518/Cys536, Cys524/Cys569, and Cys528/Cys544. The segment at 555 to 624 (VDLTGNQESM…HTQGVRRDLS (70 aa)) is disordered. The chain crosses the membrane as a helical span at residues 636 to 656 (LLLACVAAAFALGASVSGLLV). Over 657–960 (SCACRRANRR…PAPHGSHFNF (304 aa)) the chain is Cytoplasmic. 3 disordered regions span residues 685 to 725 (LARL…SPPE), 745 to 792 (ASGG…PGQE), and 806 to 960 (HGPQ…HFNF). Positions 899–909 (RVPSGGPSRYS) are enriched in low complexity. Residues 922-935 (PDGHRGRSLKRVDV) show a composition bias toward basic and acidic residues. Residues 940–952 (SPKPPLATPPQPA) show a composition bias toward pro residues.

The protein belongs to the semaphorin family. In terms of tissue distribution, expressed in many regions of the developing nervous system, probably in neurons and their precursors, but also in nonneural tissue such as immature muscle and dermis. In adult, strong expression in the skeletal muscle and moderate expression in the brain, where cerebellum shows the highest expression. Also expressed in almost all areas of the CNS.

Its subcellular location is the cell membrane. In terms of biological role, shows growth cone collapsing activity on dorsal root ganglion (DRG) neurons in vitro. May be a stop signal for the DRG neurons in their target areas, and possibly also for other neurons. May also be involved in the maintenance and remodeling of neuronal connections. The chain is Semaphorin-6C (Sema6c) from Rattus norvegicus (Rat).